Here is a 499-residue protein sequence, read N- to C-terminus: Glycerol kinase (499 aa).

T13 provides a ligand contact to ADP. Residues T13, T14, and S15 each contribute to the ATP site. T13 contacts sn-glycerol 3-phosphate. R17 is an ADP binding site. Residues R83, E84, Y135, and D244 each coordinate sn-glycerol 3-phosphate. R83, E84, Y135, D244, and Q245 together coordinate glycerol. The ADP site is built by T266 and G309. ATP contacts are provided by T266, G309, Q313, and G410. G410 and N414 together coordinate ADP.

It belongs to the FGGY kinase family.

The catalysed reaction is glycerol + ATP = sn-glycerol 3-phosphate + ADP + H(+). It functions in the pathway polyol metabolism; glycerol degradation via glycerol kinase pathway; sn-glycerol 3-phosphate from glycerol: step 1/1. With respect to regulation, inhibited by fructose 1,6-bisphosphate (FBP). Functionally, key enzyme in the regulation of glycerol uptake and metabolism. Catalyzes the phosphorylation of glycerol to yield sn-glycerol 3-phosphate. This is Glycerol kinase from Paraburkholderia phymatum (strain DSM 17167 / CIP 108236 / LMG 21445 / STM815) (Burkholderia phymatum).